Reading from the N-terminus, the 357-residue chain is MRRQLRSRRAPSFPYSYRYRLDDPDEANQNYLADEEEEAEEEARVTVVPKSEEEEEEEEKEEEEEEEKEEEEGQGQPTGNAWWQKLQIMSEYLWDPERRMFLARTGQSWSLILLIYFFFYASLAAVITLCMYTLFLTISPYIPTFTERVKPPGVMIRPFAHSLNFNFNVSEPDTWQHYVISLNGFLQGYNDSLQEEMNVDCPPGQYFIQDGNEDEDKKACQFKRSFLKNCSGLEDPTFGYSTGQPCILLKMNRIVGFRPELGDPVKVSCKVQRGDENDIRSISYYPESASFDLRYYPYYGKLTHVNYTSPLVAMHFTDVVKNQAVPVQCQLKGKGVINDVINDRFVGRVIFTLNIET.

Residues Met1 to Ser110 are Nuclear-facing. Positions Tyr15 to Asn80 are disordered. The segment covering Glu52 to Gly73 has biased composition (acidic residues). The helical; Signal-anchor for type II membrane protein transmembrane segment at Leu111 to Met131 threads the bilayer. Topologically, residues Tyr132–Thr357 are perinuclear space.

Belongs to the X(+)/potassium ATPases subunit beta family. As to quaternary structure, associates with a SMAD7-transcriptional complex. Interacts with SNW1 and TOR1AIP1. According to PubMed:17592128, does not associate with known Na,K-ATPase alpha-subunits. As to expression, highly expressed in skeletal muscle and at a lower level in heart.

Its subcellular location is the nucleus inner membrane. May act as a transcriptional coregulator during muscle development through its interaction with SNW1. Has lost its ancestral function as a Na,K-ATPase beta-subunit. The sequence is that of Protein ATP1B4 (ATP1B4) from Homo sapiens (Human).